Reading from the N-terminus, the 292-residue chain is Probable 2-(5''-triphosphoribosyl)-3'-dephosphocoenzyme-A synthase (292 aa).

It belongs to the CitG/MdcB family.

The enzyme catalyses 3'-dephospho-CoA + ATP = 2'-(5''-triphospho-alpha-D-ribosyl)-3'-dephospho-CoA + adenine. The chain is Probable 2-(5''-triphosphoribosyl)-3'-dephosphocoenzyme-A synthase from Shigella sonnei (strain Ss046).